Here is a 405-residue protein sequence, read N- to C-terminus: MAKEKFERTKEHVNVGTIGHVDHGKSTLTSAITCVLAAGLVEGGKAKCFKYEEIDKAPEEKERGITINITHVEYETAKRHYAHVDCPGHADYIKNMITGAAQMDGAILVVSAADGPMPQTREHVLLARQVNVPYIVVFMNKCDMVDDEELLELVELEVRELLSKYEYPGDEVPVIRGSALGALQELEQNSPGKWVESIKELLNAMDEYIPTPQREVDKPFLMPIEDVFSISGRGTVVTGRVERGVLRPGDEVEIVGLREEPLKTVATSIEMFRKVLDEALPGDNIGVLLRGVGKDDVERGQVLAQPGSVKAHKRFRAQVYVLSKEEGGRHTPFFVNYRPQFYFRTADVTGTVVKLPEGVEMVMPGDNVELEVELIAPVALEEGLRFAIREGGRTVGAGVVTKILD.

One can recognise a tr-type G domain in the interval 10-213 (KEHVNVGTIG…AMDEYIPTPQ (204 aa)). Residues 19-26 (GHVDHGKS) are G1. 19 to 26 (GHVDHGKS) lines the GTP pocket. Ser-26 contributes to the Mg(2+) binding site. The tract at residues 64-68 (GITIN) is G2. The interval 85 to 88 (DCPG) is G3. GTP contacts are provided by residues 85-89 (DCPGH) and 140-143 (NKCD). The tract at residues 140 to 143 (NKCD) is G4. The interval 178-180 (SAL) is G5.

This sequence belongs to the TRAFAC class translation factor GTPase superfamily. Classic translation factor GTPase family. EF-Tu/EF-1A subfamily. Monomer.

It localises to the cytoplasm. It carries out the reaction GTP + H2O = GDP + phosphate + H(+). GTP hydrolase that promotes the GTP-dependent binding of aminoacyl-tRNA to the A-site of ribosomes during protein biosynthesis. The chain is Elongation factor Tu from Aquifex aeolicus (strain VF5).